Here is a 257-residue protein sequence, read N- to C-terminus: Transcription factor MYB4 (257 aa).

2 HTH myb-type domains span residues 9–61 (KMGL…INYL) and 62–116 (RPDI…KKRL). 2 DNA-binding regions (H-T-H motif) span residues 37–61 (WRAL…INYL) and 89–112 (WSAI…HTHL). The tract at residues 115–179 (RLDAPAQGGH…VAEEHGNAGI (65 aa)) is disordered. The span at 130–140 (GKKHKKPKSAK) shows a compositional bias: basic residues. Over residues 141–170 (KPAAAAAAPPASPERSASSSVTESSMASSV) the composition is skewed to low complexity.

It is found in the nucleus. In terms of biological role, transcriptional activator involved in cold stress response. Regulates positively the expression of genes involved in reactive oxygen species (ROS) scavenging such as peroxidase and superoxide dismutase during cold stress. Transactivates a complex gene network that have major effects on stress tolerance and panicle development. The sequence is that of Transcription factor MYB4 from Oryza sativa subsp. japonica (Rice).